The chain runs to 488 residues: MFSRVGRLTTFGAQAVSNCPFRRDNIYQQPLKVTAPINDQLTSFAHSFSDSVRHRTTSFGNDPFLGVPMDDDEVIKELELLDLDSWHTKPRAPCPAPSDELELDQFWEGKNVTVCGRDPRLGKSTDCFELEAWRPTDSWQNGSSVGHPHGHQQQQQTCQQPPTHSSTTETMHDFSNFGDNMGSPLFQSPSKSAIDQLTGTSRIDEYGMPPQDRKLSKFEMDIEQESKAVDWEAWNHYLESDDDVFKRPEAFFKEEPMIMTSSDSLMTSSTSSPDSGISLYDPMIPPPSSHFPSFNLSSSSSASNLLRLSTPSAPMQQEHRAPVRMHHDVDLFSSGPLLCVPKQEDVFDDFIQQRDDDDEDYIPASEARRTSSRLNRKSATPTYLRRRDSERSWTPASDDYFPEEHQKFKKRGVVLKPSVDEETDRRRMLNRIAAVRYREKKRAEKKGRKMEFQEVADRNRILLQKERQLKREINSMKKELRKMGAIIQ.

The N-terminal 23 residues, 1 to 23 (MFSRVGRLTTFGAQAVSNCPFRR), are a transit peptide targeting the mitochondrion. The interval 138–191 (SWQNGSSVGHPHGHQQQQQTCQQPPTHSSTTETMHDFSNFGDNMGSPLFQSPSK) is disordered. The segment covering 142-168 (GSSVGHPHGHQQQQQTCQQPPTHSSTT) has biased composition (low complexity). Residue Lys-342 forms a Glycyl lysine isopeptide (Lys-Gly) (interchain with G-Cter in smo-1) linkage. The interval 353 to 400 (QRDDDDEDYIPASEARRTSSRLNRKSATPTYLRRRDSERSWTPASDDY) is disordered. One can recognise a bZIP domain in the interval 420-483 (DEETDRRRML…NSMKKELRKM (64 aa)). Positions 425–460 (RRRMLNRIAAVRYREKKRAEKKGRKMEFQEVADRNR) are basic motif. A Nuclear localization signal motif is present at residues 436–441 (RYREKK). The tract at residues 462–469 (LLQKERQL) is leucine-zipper.

The protein belongs to the bZIP family. Post-translationally, may be desumoylated by ulp-4. Ubiquitously expressed.

The protein localises to the mitochondrion matrix. The protein resides in the cytoplasm. Its subcellular location is the nucleus. Acts as a transcription factor during mitochondrial stress by activating the mitochondrial unfolded protein response (mtUPR). Induces nuclear and mitochondrial gene transcription, including genes coding for mitochondrial chaperones and proteins involved in glycolysis, amino acid catabolism and innate immunity. Following mitochondrial stress, restores mitochondrial respiratory capacity by limiting the transcription of oxidative phosphorylation (OXPHOS) machinery genes and by promoting the assembly of OXPHOS complexes via the up-regulation of chaperone and assembly factor genes. Component of a feedback loop involving atfs-1, atgl-1 and hlh-11. Acts together with flp-7 to negatively regulate the expression of the transcription regulator hlh-11, to promote expression of atgl-1, and thus atgl-1-dependent fat oxidation in response to mitochondrial stress. In addition, functions with hlh-11 to maintain lifespan. Promotes mtDNA maintenance and propagation of deleterious mtDNA. In Caenorhabditis elegans, this protein is Stress activated transcription factor atfs-1.